Reading from the N-terminus, the 244-residue chain is Small ribosomal subunit protein uS3 (244 aa).

The KH type-2 domain maps to Ile39–Lys107. Residues Leu216–Asn244 form a disordered region. Over residues Lys220–Lys238 the composition is skewed to basic residues.

The protein belongs to the universal ribosomal protein uS3 family. In terms of assembly, part of the 30S ribosomal subunit. Forms a tight complex with proteins S10 and S14.

Functionally, binds the lower part of the 30S subunit head. Binds mRNA in the 70S ribosome, positioning it for translation. The polypeptide is Small ribosomal subunit protein uS3 (Finegoldia magna (strain ATCC 29328 / DSM 20472 / WAL 2508) (Peptostreptococcus magnus)).